Reading from the N-terminus, the 327-residue chain is ATPase ASNA1 homolog (327 aa).

26–33 (KGGVGKTT) is an ATP binding site. D57 is a catalytic residue. The ATP site is built by E238 and N265. The Zn(2+) site is built by C274 and C277.

This sequence belongs to the arsA ATPase family. Homodimer.

The protein localises to the cytoplasm. It is found in the endoplasmic reticulum. In terms of biological role, ATPase required for the post-translational delivery of tail-anchored (TA) proteins to the endoplasmic reticulum. Recognizes and selectively binds the transmembrane domain of TA proteins in the cytosol. This complex then targets to the endoplasmic reticulum by membrane-bound receptors, where the tail-anchored protein is released for insertion. This process is regulated by ATP binding and hydrolysis. ATP binding drives the homodimer towards the closed dimer state, facilitating recognition of newly synthesized TA membrane proteins. ATP hydrolysis is required for insertion. Subsequently, the homodimer reverts towards the open dimer state, lowering its affinity for the membrane-bound receptor, and returning it to the cytosol to initiate a new round of targeting. In Entamoeba dispar (strain ATCC PRA-260 / SAW760), this protein is ATPase ASNA1 homolog.